The chain runs to 355 residues: Uroporphyrinogen decarboxylase (355 aa).

Substrate is bound by residues 27 to 31 (RQAGR), Asp78, Tyr155, Ser210, and His328.

The protein belongs to the uroporphyrinogen decarboxylase family. In terms of assembly, homodimer.

It is found in the cytoplasm. It catalyses the reaction uroporphyrinogen III + 4 H(+) = coproporphyrinogen III + 4 CO2. Its pathway is porphyrin-containing compound metabolism; protoporphyrin-IX biosynthesis; coproporphyrinogen-III from 5-aminolevulinate: step 4/4. In terms of biological role, catalyzes the decarboxylation of four acetate groups of uroporphyrinogen-III to yield coproporphyrinogen-III. The protein is Uroporphyrinogen decarboxylase of Azotobacter vinelandii (strain DJ / ATCC BAA-1303).